Consider the following 345-residue polypeptide: Glycerol-3-phosphate dehydrogenase [NAD(P)+] (345 aa).

NADPH-binding residues include serine 23, tyrosine 24, histidine 44, and lysine 118. Lysine 118, glycine 147, and threonine 149 together coordinate sn-glycerol 3-phosphate. Residue alanine 151 participates in NADPH binding. Sn-glycerol 3-phosphate contacts are provided by lysine 203, aspartate 256, serine 266, arginine 267, and asparagine 268. The active-site Proton acceptor is lysine 203. Arginine 267 serves as a coordination point for NADPH. NADPH is bound by residues valine 291 and glutamate 293.

The protein belongs to the NAD-dependent glycerol-3-phosphate dehydrogenase family.

The protein localises to the cytoplasm. It carries out the reaction sn-glycerol 3-phosphate + NAD(+) = dihydroxyacetone phosphate + NADH + H(+). It catalyses the reaction sn-glycerol 3-phosphate + NADP(+) = dihydroxyacetone phosphate + NADPH + H(+). The protein operates within membrane lipid metabolism; glycerophospholipid metabolism. Catalyzes the reduction of the glycolytic intermediate dihydroxyacetone phosphate (DHAP) to sn-glycerol 3-phosphate (G3P), the key precursor for phospholipid synthesis. The polypeptide is Glycerol-3-phosphate dehydrogenase [NAD(P)+] (Vibrio parahaemolyticus serotype O3:K6 (strain RIMD 2210633)).